Reading from the N-terminus, the 64-residue chain is Copper-metallothionein (64 aa).

At Ser1 the chain carries N-acetylserine. Positions 7, 11, 16, 18, 22, 24, 28, 30, 33, 36, 38, 43, 45, 49, 55, 57, 61, and 63 each coordinate Cu(+).

The protein belongs to the metallothionein superfamily. Type 2 family.

Its function is as follows. The metallothioneins are involved in the cellular sequestration of toxic metal ions and regulation of essential trace elements. This isoform binds exclusively copper. In Helix pomatia (Roman snail), this protein is Copper-metallothionein.